A 130-amino-acid chain; its full sequence is L-ectoine synthase (130 aa).

The protein belongs to the ectoine synthase family.

The enzyme catalyses (2S)-4-acetamido-2-aminobutanoate = L-ectoine + H2O. It functions in the pathway amine and polyamine biosynthesis; ectoine biosynthesis; L-ectoine from L-aspartate 4-semialdehyde: step 3/3. Its function is as follows. Catalyzes the circularization of gamma-N-acetyl-alpha,gamma-diaminobutyric acid (ADABA) to ectoine (1,4,5,6-tetrahydro-2-methyl-4-pyrimidine carboxylic acid), which is an excellent osmoprotectant. The chain is L-ectoine synthase from Mycobacteroides abscessus (strain ATCC 19977 / DSM 44196 / CCUG 20993 / CIP 104536 / JCM 13569 / NCTC 13031 / TMC 1543 / L948) (Mycobacterium abscessus).